The sequence spans 165 residues: MTDSNDPVVRGYLLQLIGEEGIEMIENMPEGEVTDEQIAEASGVMLNIVRRTLFIMNENNLAVCRRERDSSSGWLTYLWQLDLSDIESHLVKEKKRITKNLEIRYNFEVDSVFYTCPEGCVRFEFKEASKCEFMCPACGEDMMFEDNSVMVKKLRDRLDALEASS.

In terms of domain architecture, HTH TFE/IIEalpha-type spans 5–87; that stretch reads NDPVVRGYLL…LWQLDLSDIE (83 aa).

Belongs to the TFE family. As to quaternary structure, monomer. Interaction with RNA polymerase subunits RpoF and RpoE is necessary for Tfe stimulatory transcription activity. Able to interact with Tbp and RNA polymerase in the absence of DNA promoter. Interacts both with the preinitiation and elongation complexes.

In terms of biological role, transcription factor that plays a role in the activation of archaeal genes transcribed by RNA polymerase. Facilitates transcription initiation by enhancing TATA-box recognition by TATA-box-binding protein (Tbp), and transcription factor B (Tfb) and RNA polymerase recruitment. Not absolutely required for transcription in vitro, but particularly important in cases where Tbp or Tfb function is not optimal. It dynamically alters the nucleic acid-binding properties of RNA polymerases by stabilizing the initiation complex and destabilizing elongation complexes. Seems to translocate with the RNA polymerase following initiation and acts by binding to the non template strand of the transcription bubble in elongation complexes. This Methanococcoides burtonii (strain DSM 6242 / NBRC 107633 / OCM 468 / ACE-M) protein is Transcription factor E.